Reading from the N-terminus, the 395-residue chain is Cytochrome b561 and DOMON domain-containing protein At5g47530 (395 aa).

The N-terminal stretch at 1–24 (MAISSNLLLCLSLFIFIITKSALA) is a signal peptide. Residues 47–162 (LDSFLHYTYD…GIINTVWQDG (116 aa)) enclose the DOMON domain. The region spanning 176–371 (GNNVRSVSTL…LEGFTWYVVI (196 aa)) is the Cytochrome b561 domain. 2 helical membrane-spanning segments follow: residues 210 to 230 (IHGI…AIIA) and 242 to 262 (AWFY…VAGW). Heme b contacts are provided by His211, His247, and His280. The chain crosses the membrane as a helical span at residues 282 to 302 (AVGIALFCLATIQVFAMFLRP). Position 316 (His316) interacts with heme b. The next 2 helical transmembrane spans lie at 318-338 (TVGY…LDIL) and 351-371 (IIVV…YVVI).

Heme b is required as a cofactor.

The protein localises to the membrane. May act as a catecholamine-responsive trans-membrane electron transporter. The chain is Cytochrome b561 and DOMON domain-containing protein At5g47530 from Arabidopsis thaliana (Mouse-ear cress).